We begin with the raw amino-acid sequence, 357 residues long: tRNA N6-adenosine threonylcarbamoyltransferase (357 aa).

The Fe cation site is built by H115 and H119. Substrate is bound by residues L137 to G141, D170, G183, and N281. D309 lines the Fe cation pocket.

This sequence belongs to the KAE1 / TsaD family. The cofactor is Fe(2+).

The protein localises to the cytoplasm. The enzyme catalyses L-threonylcarbamoyladenylate + adenosine(37) in tRNA = N(6)-L-threonylcarbamoyladenosine(37) in tRNA + AMP + H(+). Required for the formation of a threonylcarbamoyl group on adenosine at position 37 (t(6)A37) in tRNAs that read codons beginning with adenine. Is involved in the transfer of the threonylcarbamoyl moiety of threonylcarbamoyl-AMP (TC-AMP) to the N6 group of A37, together with TsaE and TsaB. TsaD likely plays a direct catalytic role in this reaction. This chain is tRNA N6-adenosine threonylcarbamoyltransferase, found in Nitrobacter hamburgensis (strain DSM 10229 / NCIMB 13809 / X14).